Reading from the N-terminus, the 835-residue chain is Phenylalanine--tRNA ligase beta subunit (835 aa).

The 117-residue stretch at 44-160 (PATTGPLVLG…ESGQPGDDAR (117 aa)) folds into the tRNA-binding domain. The region spanning 419–494 (PTMPSITMPV…RLEGLEAIPT (76 aa)) is the B5 domain. 4 residues coordinate Mg(2+): Asp-472, Asp-478, Glu-481, and Glu-482. One can recognise an FDX-ACB domain in the interval 741–834 (SAFPALHQDI…AKERLGAEMR (94 aa)).

It belongs to the phenylalanyl-tRNA synthetase beta subunit family. Type 1 subfamily. As to quaternary structure, tetramer of two alpha and two beta subunits. Mg(2+) serves as cofactor.

It is found in the cytoplasm. It catalyses the reaction tRNA(Phe) + L-phenylalanine + ATP = L-phenylalanyl-tRNA(Phe) + AMP + diphosphate + H(+). The protein is Phenylalanine--tRNA ligase beta subunit of Corynebacterium efficiens (strain DSM 44549 / YS-314 / AJ 12310 / JCM 11189 / NBRC 100395).